Reading from the N-terminus, the 134-residue chain is Small ribosomal subunit protein uS11 (134 aa).

It belongs to the universal ribosomal protein uS11 family. Part of the 30S ribosomal subunit. Interacts with proteins S7 and S18. Binds to IF-3.

Its function is as follows. Located on the platform of the 30S subunit, it bridges several disparate RNA helices of the 16S rRNA. Forms part of the Shine-Dalgarno cleft in the 70S ribosome. This is Small ribosomal subunit protein uS11 from Polaromonas sp. (strain JS666 / ATCC BAA-500).